A 100-amino-acid polypeptide reads, in one-letter code: uncharacterized protein (100 aa).

The chain crosses the membrane as a helical span at residues 28–45 (VFLVFYIITMVKIYIFLI).

Its subcellular location is the membrane. This is an uncharacterized protein from Saccharomyces cerevisiae (strain ATCC 204508 / S288c) (Baker's yeast).